Here is a 40-residue protein sequence, read N- to C-terminus: uncharacterized protein (40 aa).

This is an uncharacterized protein from Treponema pallidum (strain Nichols).